The primary structure comprises 230 residues: Fibrillarin-like rRNA/tRNA 2'-O-methyltransferase (230 aa).

S-adenosyl-L-methionine is bound by residues Thr-87–Thr-88, Glu-105–Phe-106, Asp-130–Ala-131, and Asp-150–Gln-153.

It belongs to the methyltransferase superfamily. Fibrillarin family. Interacts with nop5. Component of box C/D small ribonucleoprotein (sRNP) particles that contain rpl7ae, FlpA and nop5, plus a guide RNA.

In terms of biological role, involved in pre-rRNA and tRNA processing. Utilizes the methyl donor S-adenosyl-L-methionine to catalyze the site-specific 2'-hydroxyl methylation of ribose moieties in rRNA and tRNA. Site specificity is provided by a guide RNA that base pairs with the substrate. Methylation occurs at a characteristic distance from the sequence involved in base pairing with the guide RNA. This Methanococcus maripaludis (strain C5 / ATCC BAA-1333) protein is Fibrillarin-like rRNA/tRNA 2'-O-methyltransferase.